The following is a 559-amino-acid chain: Phosphatase and actin regulator 3 (559 aa).

Residues 1 to 65 (MAASEDGSGC…GIRTPPVRRN (65 aa)) form a disordered region. The span at 15–24 (GRSQSDPSVL) shows a compositional bias: polar residues. Low complexity predominate over residues 25 to 35 (TDSSATSSADA). T70 bears the Phosphothreonine mark. The tract at residues 82 to 342 (KKKNEKLKQT…VERGKEREEA (261 aa)) is disordered. The stretch at 93–118 (SALEKKMAGRQGREELIKKGLLEMME) is one RPEL 1 repeat. The span at 95–113 (LEKKMAGRQGREELIKKGL) shows a compositional bias: basic and acidic residues. The span at 134 to 151 (SVQSEPPTPKSETLTSED) shows a compositional bias: polar residues. The span at 229–240 (PSPPLLPTPPPK) shows a compositional bias: pro residues. Residue S230 is modified to Phosphoserine. T236 bears the Phosphothreonine mark. Composition is skewed to polar residues over residues 248–262 (NVTG…SSMK) and 270–281 (GQLSTPTGSPHL). Over residues 293–342 (VIEELHRALATKHRQDSFQGRESKGSPKKRLDVRLSRTSSVERGKEREEA) the composition is skewed to basic and acidic residues. The stretch at 346 to 369 (DGALENKRTAAKESEENKENLIIN) forms a coiled coil. RPEL repeat units follow at residues 401-426 (ELLA…PRRT), 439-464 (MKLS…KQRN), and 477-502 (QRLT…IRFS). The tract at residues 438–518 (EMKLSKRLSQ…KAQDYDRRAD (81 aa)) is required for PP1CA binding and inhibition of PP1 activity. The stretch at 450–486 (AVEELERRNILKQRNDQTEQEERREIKQRLTRKLNQR) forms a coiled coil.

This sequence belongs to the phosphatase and actin regulator family. Binds actin and PPP1CA; thus inhibiting the protein phosphatase 1 (PP1) activity. In terms of tissue distribution, abundantly expressed in brain. Also found in several tumors such as lung carcinomas, nervous tumors and HL-60 leukemia cells. Isoform 3 is the major form in U-937, GOTO and HL-60 leukemia cells.

The protein localises to the nucleus matrix. The protein is Phosphatase and actin regulator 3 (PHACTR3) of Homo sapiens (Human).